The following is a 316-amino-acid chain: tRNA-cytidine(32) 2-sulfurtransferase (316 aa).

The short motif at 58 to 63 is the PP-loop motif element; the sequence is SGGKDS. Positions 133, 136, and 224 each coordinate [4Fe-4S] cluster.

Belongs to the TtcA family. As to quaternary structure, homodimer. Requires Mg(2+) as cofactor. It depends on [4Fe-4S] cluster as a cofactor.

It is found in the cytoplasm. The enzyme catalyses cytidine(32) in tRNA + S-sulfanyl-L-cysteinyl-[cysteine desulfurase] + AH2 + ATP = 2-thiocytidine(32) in tRNA + L-cysteinyl-[cysteine desulfurase] + A + AMP + diphosphate + H(+). The protein operates within tRNA modification. Catalyzes the ATP-dependent 2-thiolation of cytidine in position 32 of tRNA, to form 2-thiocytidine (s(2)C32). The sulfur atoms are provided by the cysteine/cysteine desulfurase (IscS) system. The sequence is that of tRNA-cytidine(32) 2-sulfurtransferase from Aromatoleum aromaticum (strain DSM 19018 / LMG 30748 / EbN1) (Azoarcus sp. (strain EbN1)).